A 502-amino-acid polypeptide reads, in one-letter code: ATP-dependent DNA helicase uvsW (502 aa).

Positions 122-280 (VFEGLVNRRR…QYVGMFGEIF (159 aa)) constitute a Helicase ATP-binding domain. 135 to 142 (LPTSAGKS) contacts ATP. The short motif at 232-235 (DECH) is the DEAH box element. The 167-residue stretch at 335–501 (WIAKLAIKLA…KFNYVMKTVN (167 aa)) folds into the Helicase C-terminal domain.

In terms of assembly, probably interacts with UvsW.1. Interacts with gp32. It depends on Mg(2+) as a cofactor.

It catalyses the reaction Couples ATP hydrolysis with the unwinding of duplex DNA by translocating in the 3'-5' direction.. The enzyme catalyses ATP + H2O = ADP + phosphate + H(+). With respect to regulation, unwinding activity is strongly stimulated by single-stranded binding protein gp32, the ssDNA annealing activity is partially inhibited by gp32 and strongly inhibited by ATP-gamma-S. Another study did not find gp32 stimulation of helicase activity. Holliday junction (HJ) branch migration is inhibited by ATP-gamma-S. Its function is as follows. Plays important roles in recombination-dependent DNA repair and the reorganization of stalled replication forks during viral DNA synthesis. Active on in vivo-derived T4 DNA; viral DNA is highly modified by hydroxymethylation and glucosylation of cytosine residues. Helps process Holliday junction (HJ) intermediates to mature products by catalyzing branch migration. Probably able to catalyze replication fork regression. Unwinds HJ and Y-branched but not linear double-stranded (ds)DNA; unwinding requires ATP and Mg(2+). Unwinds dsDNA with a 3'-single-stranded (ss)DNA overhang, suggesting it is a 3'-5' helicase. Another study does not find this activity. Unwinds D- and R-loops. Also anneals ssDNA; ATP stimulates annealing. Has ssDNA and dsDNA-stimulated ATPase activity, also hydrolyzes GTP in the presence of DNA. The sequence is that of ATP-dependent DNA helicase uvsW from Enterobacteria phage T4 (Bacteriophage T4).